The sequence spans 401 residues: Enolase (401 aa).

A (2R)-2-phosphoglycerate-binding site is contributed by glutamine 154. The active-site Proton donor is glutamate 196. 3 residues coordinate Mg(2+): aspartate 232, glutamate 275, and aspartate 302. 4 residues coordinate (2R)-2-phosphoglycerate: lysine 327, arginine 356, serine 357, and lysine 378. Catalysis depends on lysine 327, which acts as the Proton acceptor.

The protein belongs to the enolase family. Mg(2+) is required as a cofactor.

Its subcellular location is the cytoplasm. It is found in the secreted. It localises to the cell surface. It carries out the reaction (2R)-2-phosphoglycerate = phosphoenolpyruvate + H2O. It functions in the pathway carbohydrate degradation; glycolysis; pyruvate from D-glyceraldehyde 3-phosphate: step 4/5. In terms of biological role, catalyzes the reversible conversion of 2-phosphoglycerate (2-PG) into phosphoenolpyruvate (PEP). It is essential for the degradation of carbohydrates via glycolysis. This is Enolase from Haloarcula marismortui (strain ATCC 43049 / DSM 3752 / JCM 8966 / VKM B-1809) (Halobacterium marismortui).